The sequence spans 214 residues: Thymidylate kinase (214 aa).

7–14 (GVDGAGKR) is a binding site for ATP. Positions 9, 39, 70, 74, 95, 100, and 103 each coordinate dTMP. Position 9 (D9) interacts with Mg(2+). The interval 147 to 159 (GERSRGRAQRDPG) is LID. Positions 163 and 165 each coordinate dTMP. E166 is a Mg(2+) binding site.

The protein belongs to the thymidylate kinase family. In terms of assembly, homodimer. It depends on Mg(2+) as a cofactor.

The enzyme catalyses dTMP + ATP = dTDP + ADP. Its pathway is pyrimidine metabolism; dTTP biosynthesis. Catalyzes the reversible phosphorylation of deoxythymidine monophosphate (dTMP) to deoxythymidine diphosphate (dTDP), using ATP as its preferred phosphoryl donor. Situated at the junction of both de novo and salvage pathways of deoxythymidine triphosphate (dTTP) synthesis, is essential for DNA synthesis and cellular growth. The polypeptide is Thymidylate kinase (tmk) (Mycobacterium tuberculosis (strain CDC 1551 / Oshkosh)).